The sequence spans 381 residues: Galactose-1-phosphate uridylyltransferase (381 aa).

Zn(2+) contacts are provided by cysteine 65 and cysteine 68. Position 90-91 (90-91 (ND)) interacts with UDP-alpha-D-glucose. Residue histidine 131 coordinates Zn(2+). UDP-alpha-D-glucose is bound at residue asparagine 175. Histidine 186 provides a ligand contact to Zn(2+). Residue histidine 188 is the Tele-UMP-histidine intermediate of the active site. Glutamine 190 is a UDP-alpha-D-glucose binding site. Residues glutamate 204, histidine 306, histidine 323, and histidine 325 each contribute to the Fe cation site. Residues 338-341 (KFMV) and 343-344 (FE) contribute to the UDP-alpha-D-glucose site.

The protein belongs to the galactose-1-phosphate uridylyltransferase type 1 family. As to quaternary structure, homodimer. The cofactor is Zn(2+).

It carries out the reaction alpha-D-galactose 1-phosphate + UDP-alpha-D-glucose = alpha-D-glucose 1-phosphate + UDP-alpha-D-galactose. Its pathway is carbohydrate metabolism; galactose metabolism. This chain is Galactose-1-phosphate uridylyltransferase (GAL7), found in Cryptococcus neoformans var. neoformans serotype D (strain B-3501A) (Filobasidiella neoformans).